The following is a 258-amino-acid chain: Indole-3-glycerol phosphate synthase (258 aa).

This sequence belongs to the TrpC family.

The enzyme catalyses 1-(2-carboxyphenylamino)-1-deoxy-D-ribulose 5-phosphate + H(+) = (1S,2R)-1-C-(indol-3-yl)glycerol 3-phosphate + CO2 + H2O. The protein operates within amino-acid biosynthesis; L-tryptophan biosynthesis; L-tryptophan from chorismate: step 4/5. The chain is Indole-3-glycerol phosphate synthase from Nautilia profundicola (strain ATCC BAA-1463 / DSM 18972 / AmH).